We begin with the raw amino-acid sequence, 113 residues long: MSMFRAKKLDLGCFTNVRVLRDHSKRKAFLEAEPERQALRYVIRNTTLPARTRAVAQLQLTQMHAYTRPTQIRNRCILGGKSRGILRDFKMTRYNFRMNALMGNIPGVKKASW.

The protein belongs to the universal ribosomal protein uS14 family. Component of the mitochondrial small ribosomal subunit (mt-SSU). Mature N.crassa 74S mitochondrial ribosomes consist of a small (37S) and a large (54S) subunit. The 37S small subunit contains a 16S ribosomal RNA (16S mt-rRNA) and 32 different proteins. The 54S large subunit contains a 23S rRNA (23S mt-rRNA) and 42 different proteins.

The protein localises to the mitochondrion. Component of the mitochondrial ribosome (mitoribosome), a dedicated translation machinery responsible for the synthesis of mitochondrial genome-encoded proteins, including at least some of the essential transmembrane subunits of the mitochondrial respiratory chain. The mitoribosomes are attached to the mitochondrial inner membrane and translation products are cotranslationally integrated into the membrane. The protein is Small ribosomal subunit protein uS14m (mrp2) of Neurospora crassa (strain ATCC 24698 / 74-OR23-1A / CBS 708.71 / DSM 1257 / FGSC 987).